A 220-amino-acid chain; its full sequence is Probable nicotinate-nucleotide adenylyltransferase (220 aa).

It belongs to the NadD family.

It carries out the reaction nicotinate beta-D-ribonucleotide + ATP + H(+) = deamido-NAD(+) + diphosphate. It participates in cofactor biosynthesis; NAD(+) biosynthesis; deamido-NAD(+) from nicotinate D-ribonucleotide: step 1/1. Functionally, catalyzes the reversible adenylation of nicotinate mononucleotide (NaMN) to nicotinic acid adenine dinucleotide (NaAD). This Saccharophagus degradans (strain 2-40 / ATCC 43961 / DSM 17024) protein is Probable nicotinate-nucleotide adenylyltransferase.